We begin with the raw amino-acid sequence, 228 residues long: Ribose-5-phosphate isomerase A (228 aa).

Substrate contacts are provided by residues 32 to 35, 85 to 88, and 98 to 101; these read TGST, DGAD, and KGGG. Catalysis depends on glutamate 107, which acts as the Proton acceptor. Lysine 125 is a binding site for substrate.

It belongs to the ribose 5-phosphate isomerase family. In terms of assembly, homodimer.

The catalysed reaction is aldehydo-D-ribose 5-phosphate = D-ribulose 5-phosphate. The protein operates within carbohydrate degradation; pentose phosphate pathway; D-ribose 5-phosphate from D-ribulose 5-phosphate (non-oxidative stage): step 1/1. Functionally, catalyzes the reversible conversion of ribose-5-phosphate to ribulose 5-phosphate. This Ralstonia nicotianae (strain ATCC BAA-1114 / GMI1000) (Ralstonia solanacearum) protein is Ribose-5-phosphate isomerase A.